The following is a 278-amino-acid chain: Shikimate dehydrogenase (NADP(+)) (278 aa).

Shikimate contacts are provided by residues 19 to 21 (SLS) and threonine 66. Lysine 70 acts as the Proton acceptor in catalysis. Residues asparagine 91 and aspartate 106 each contribute to the shikimate site. NADP(+)-binding positions include 130 to 134 (GAGGS), 152 to 157 (NRTVEK), and leucine 222. Shikimate is bound at residue tyrosine 224. Position 245 (glycine 245) interacts with NADP(+).

It belongs to the shikimate dehydrogenase family. Homodimer.

The enzyme catalyses shikimate + NADP(+) = 3-dehydroshikimate + NADPH + H(+). It participates in metabolic intermediate biosynthesis; chorismate biosynthesis; chorismate from D-erythrose 4-phosphate and phosphoenolpyruvate: step 4/7. Functionally, involved in the biosynthesis of the chorismate, which leads to the biosynthesis of aromatic amino acids. Catalyzes the reversible NADPH linked reduction of 3-dehydroshikimate (DHSA) to yield shikimate (SA). The sequence is that of Shikimate dehydrogenase (NADP(+)) from Methanococcus aeolicus (strain ATCC BAA-1280 / DSM 17508 / OCM 812 / Nankai-3).